The sequence spans 427 residues: Histidine--tRNA ligase (427 aa).

Belongs to the class-II aminoacyl-tRNA synthetase family. In terms of assembly, homodimer.

It is found in the cytoplasm. The enzyme catalyses tRNA(His) + L-histidine + ATP = L-histidyl-tRNA(His) + AMP + diphosphate + H(+). This chain is Histidine--tRNA ligase, found in Proteus mirabilis (strain HI4320).